The sequence spans 229 residues: MINNSLKITDLPNNERPRERLLRYGSEVLSNSELLAIILRTGTLHENIINLSSRILKESGGLNGVLNLSFEELKKVKGIGNAKAVQILALGELFKRFKAYKSFESVKITSPKEAANLVMEQLRSFNKEHLYVIMLNTKNIVIKISDVSVGSLNSSIVHPREVYVEPILKHAASIILCHNHPSGDPKPSNEDLNITKRLYECSKFIGIELLDHIIIGDGIYISLKEEGLL.

The region spanning 107 to 229 is the MPN domain; sequence KITSPKEAAN…YISLKEEGLL (123 aa). Zn(2+) contacts are provided by His-178, His-180, and Asp-191. A JAMM motif motif is present at residues 178–191; that stretch reads HNHPSGDPKPSNED.

Belongs to the UPF0758 family.

The protein is UPF0758 protein CA_C1241 of Clostridium acetobutylicum (strain ATCC 824 / DSM 792 / JCM 1419 / IAM 19013 / LMG 5710 / NBRC 13948 / NRRL B-527 / VKM B-1787 / 2291 / W).